The primary structure comprises 211 residues: Urease accessory protein UreF (211 aa).

Belongs to the UreF family. UreD, UreF and UreG form a complex that acts as a GTP-hydrolysis-dependent molecular chaperone, activating the urease apoprotein by helping to assemble the nickel containing metallocenter of UreC. The UreE protein probably delivers the nickel.

It localises to the cytoplasm. Its function is as follows. Required for maturation of urease via the functional incorporation of the urease nickel metallocenter. The sequence is that of Urease accessory protein UreF from Mycobacterium sp. (strain JLS).